We begin with the raw amino-acid sequence, 335 residues long: MKIQFAPHNVPFERRLQTAAVLQWVFSFLALAQTCILLFFVLLFTRFWIISVVYGVWWFLDWDTPSKGGRRGEWLRRHVIWTYMKDYFPITLVKTADLDPQQNYVVGSHPHGVLVAGAFTNFCTEATGFHRLFPGITPYLLMLPLWFRAPFFRDYIMSGGLIPSDKDSASYLLKNKAGGNAVVIAVGGAPESLDARPGAFTLLIKNRKGFVRLAILHGASLVPVFSFGENELFDQVDNPRGSWLRKIQEKLQKMMGVALPLFHARGVFQYSFGLIPYRKPIATIVGKPIRVEENPNPSSEEVDKLHKIYMEELSKLFEEHKTKYNVPADKHLTFV.

2 helical membrane-spanning segments follow: residues 24–44 and 47–67; these read WVFS…VLLF and FWII…TPSK.

Belongs to the diacylglycerol acyltransferase family.

Its subcellular location is the endoplasmic reticulum membrane. The protein localises to the cytoplasm. It localises to the perinuclear region. The enzyme catalyses a 2-acylglycerol + an acyl-CoA = a 1,2-diacylglycerol + CoA. The catalysed reaction is a 2-acylglycerol + an acyl-CoA = a 1,2-diacyl-sn-glycerol + CoA. It carries out the reaction a 2-acylglycerol + an acyl-CoA = a 2,3-diacyl-sn-glycerol + CoA. It catalyses the reaction a 1-acylglycerol + an acyl-CoA = a 1,2-diacylglycerol + CoA. The enzyme catalyses a 1-acylglycerol + an acyl-CoA = a 1,3-diacylglycerol + CoA. The catalysed reaction is 1-O-alkylglycerol + an acyl-CoA = 1-O-alkyl-3-acylglycerol + CoA. It carries out the reaction an acyl-CoA + a 1,2-diacyl-sn-glycerol = a triacyl-sn-glycerol + CoA. It participates in glycerolipid metabolism; triacylglycerol biosynthesis. In terms of biological role, catalyzes the formation of diacylglycerol from 2-monoacylglycerol and fatty acyl-CoA. Functionally, involved in glycerolipid synthesis and lipid metabolism. Catalyzes the formation of diacylglycerol, the precursor of triacylglycerol, by transferring the acyl chain of a fatty acyl-CoA to a monoacylglycerol. Plays a central role in absorption of dietary fat in the small intestine by catalyzing the resynthesis of triacylglycerol in enterocytes. Has a preference toward monoacylglycerols containing unsaturated fatty acids in an order of C18:3 &gt; C18:2 &gt; C18:1 &gt; C18:0 at sn-2. Able to use 1-monoalkylglycerol (1-MAkG, 1-O-alkylglycerol) as an acyl acceptor for the synthesis of monoalkyl-monoacylglycerol (MAMAG, 1-O-alkyl-3-acylglycerol or 1-O-alkyl-2-acylglycerol) and subsequently, with lower efficiency, may add another acyl chain producing monoalkyl-diacylglycerol (MADAG, 1-O-alkyl-2,3-diacylglycerol). Possesses weak but significant activity with diacylglycerol as substrate, producing triacylglycerol (triacyl-sn-glycerol). The sequence is that of 2-acylglycerol O-acyltransferase 2-A (mogat2-a) from Xenopus laevis (African clawed frog).